The sequence spans 183 residues: Small ribosomal subunit protein uS4 (183 aa).

Residues 106-168 (RRLQTQVYRQ…AGSPLAREGH (63 aa)) form the S4 RNA-binding domain.

Belongs to the universal ribosomal protein uS4 family. In terms of assembly, part of the 30S ribosomal subunit. Contacts protein S5. The interaction surface between S4 and S5 is involved in control of translational fidelity.

Its function is as follows. One of the primary rRNA binding proteins, it binds directly to 16S rRNA where it nucleates assembly of the body of the 30S subunit. Functionally, with S5 and S12 plays an important role in translational accuracy. The chain is Small ribosomal subunit protein uS4 from Methanothrix thermoacetophila (strain DSM 6194 / JCM 14653 / NBRC 101360 / PT) (Methanosaeta thermophila).